A 403-amino-acid polypeptide reads, in one-letter code: Probable tubulin--tyrosine ligase C12B10.04 (403 aa).

One can recognise a TTL domain in the interval 9–386 (KVYVNYRDEY…PFFESSTKRN (378 aa)).

It belongs to the tubulin--tyrosine ligase family. Requires Mg(2+) as cofactor. The cofactor is K(+).

It is found in the cytoplasm. Its subcellular location is the nucleus. It carries out the reaction C-terminal L-alpha-aminoacyl-L-glutamyl-L-glutamyl-[tubulin] + L-tyrosine + ATP = C-terminal L-alpha-aminoacyl-L-glutamyl-L-glutamyl-L-tyrosyl-[tubulin] + ADP + phosphate + H(+). Functionally, probable tubulin--tyrosine ligase. This chain is Probable tubulin--tyrosine ligase C12B10.04, found in Schizosaccharomyces pombe (strain 972 / ATCC 24843) (Fission yeast).